The chain runs to 254 residues: MAETAPLRVQLIARTEFTVPPDVPWETDAEGGAALVEFAGRACYQSWSKPNPRTATNASYLRHIIDVGHLSVLEHASVSFYITGISRSCTHELIRHRHFSYSQLSQRYVPENDSQVVVPPGIEGDAELEGLFTAAADASRAAYAELLAKLEAKLMGDEPREGRATLRRKQARQAARSVLPNATETRIVVTGNYRAWRHFIAMRASEHADLEIRRLAIACLRELVAVAPAVFADFEIYPLADGTEVATTPLVTEA.

The ThyX domain maps to 7–237 (LRVQLIARTE…PAVFADFEIY (231 aa)). Residues S71, 95 to 97 (RHR), and Q103 contribute to the FAD site. DUMP is bound by residues 92–95 (ELIR), 103–107 (QLSQR), and R176. The ThyX motif motif lies at 95–105 (RHRHFSYSQLS). Residues 192–194 (NYR) and H198 contribute to the FAD site. R203 provides a ligand contact to dUMP. R203 (involved in ionization of N3 of dUMP, leading to its activation) is an active-site residue.

It belongs to the thymidylate synthase ThyX family. In terms of assembly, homotetramer. It depends on FAD as a cofactor.

The catalysed reaction is dUMP + (6R)-5,10-methylene-5,6,7,8-tetrahydrofolate + NADPH + H(+) = dTMP + (6S)-5,6,7,8-tetrahydrofolate + NADP(+). It participates in pyrimidine metabolism; dTTP biosynthesis. Catalyzes the reductive methylation of 2'-deoxyuridine-5'-monophosphate (dUMP) to 2'-deoxythymidine-5'-monophosphate (dTMP) while utilizing 5,10-methylenetetrahydrofolate (mTHF) as the methyl donor, and NADPH and FADH(2) as the reductant. The polypeptide is Flavin-dependent thymidylate synthase (Mycobacterium sp. (strain KMS)).